Consider the following 558-residue polypeptide: DNA ligase B (558 aa).

The active-site N6-AMP-lysine intermediate is the lysine 126.

This sequence belongs to the NAD-dependent DNA ligase family. LigB subfamily.

It catalyses the reaction NAD(+) + (deoxyribonucleotide)n-3'-hydroxyl + 5'-phospho-(deoxyribonucleotide)m = (deoxyribonucleotide)n+m + AMP + beta-nicotinamide D-nucleotide.. Catalyzes the formation of phosphodiester linkages between 5'-phosphoryl and 3'-hydroxyl groups in double-stranded DNA using NAD as a coenzyme and as the energy source for the reaction. The polypeptide is DNA ligase B (Pseudomonas fluorescens (strain Pf0-1)).